The sequence spans 598 residues: UvrABC system protein C (598 aa).

Residues Ser13–Val92 enclose the GIY-YIG domain. One can recognise a UVR domain in the interval Asp206–Thr241.

Belongs to the UvrC family. In terms of assembly, interacts with UvrB in an incision complex.

It localises to the cytoplasm. Functionally, the UvrABC repair system catalyzes the recognition and processing of DNA lesions. UvrC both incises the 5' and 3' sides of the lesion. The N-terminal half is responsible for the 3' incision and the C-terminal half is responsible for the 5' incision. The sequence is that of UvrABC system protein C from Chlamydia muridarum (strain MoPn / Nigg).